The following is a 380-amino-acid chain: Cytochrome b (380 aa).

The next 4 helical transmembrane spans lie at 34 to 54 (FGSLLGICLMTQILTGLLLAM), 78 to 99 (WLIRNLHANGASFFFICIYLHI), 114 to 134 (WNTGIILLLTLMATAFVGYVL), and 179 to 199 (FFALHFLLPFAIAGLTLIHLT). His84 and His98 together coordinate heme b. The heme b site is built by His183 and His197. A ubiquinone is bound at residue His202. The next 4 membrane-spanning stretches (helical) occupy residues 227-247 (LKDILGFTLMFLPLTSLALFS), 289-309 (LGGVLALAASVLILFLSPFLH), 321-341 (LSQLLFWILVTNLFILTWVGS), and 348-368 (FIIIGQLASITYFTILLILFP).

The protein belongs to the cytochrome b family. As to quaternary structure, the cytochrome bc1 complex contains 11 subunits: 3 respiratory subunits (MT-CYB, CYC1 and UQCRFS1), 2 core proteins (UQCRC1 and UQCRC2) and 6 low-molecular weight proteins (UQCRH/QCR6, UQCRB/QCR7, UQCRQ/QCR8, UQCR10/QCR9, UQCR11/QCR10 and a cleavage product of UQCRFS1). This cytochrome bc1 complex then forms a dimer. Heme b is required as a cofactor.

The protein resides in the mitochondrion inner membrane. Its function is as follows. Component of the ubiquinol-cytochrome c reductase complex (complex III or cytochrome b-c1 complex) that is part of the mitochondrial respiratory chain. The b-c1 complex mediates electron transfer from ubiquinol to cytochrome c. Contributes to the generation of a proton gradient across the mitochondrial membrane that is then used for ATP synthesis. In Daption capense (Cape petrel), this protein is Cytochrome b (MT-CYB).